A 94-amino-acid chain; its full sequence is MKIPKKVRRYCPYCKKHTIHIVEKAKKGKPSELTWGQRQFRRVTAGYGGFPRPLPDRSKPVKKIDLRFKCTECGKMHTKANGCFRSGRFEFVEK.

Zn(2+) contacts are provided by Cys11, Cys14, Cys70, and Cys73. The C4-type zinc-finger motif lies at 11-73; that stretch reads CPYCKKHTIH…IDLRFKCTEC (63 aa).

The protein belongs to the eukaryotic ribosomal protein eL42 family. As to quaternary structure, part of the 50S ribosomal subunit. It depends on Zn(2+) as a cofactor.

In terms of biological role, binds to the 23S rRNA. This chain is Large ribosomal subunit protein eL42, found in Methanocaldococcus jannaschii (strain ATCC 43067 / DSM 2661 / JAL-1 / JCM 10045 / NBRC 100440) (Methanococcus jannaschii).